The following is a 187-amino-acid chain: CRISPR system Cmr subunit Cmr1-2 (187 aa).

Belongs to the CRISPR system Cmr1 family. In terms of assembly, part of the type III-B Cmr ribonucleoprotein (RNP) complex. This is an elongated RNP with Cmr2 and Cmr3 as the base, with Cmr4 and Cmr5 forming a helical core along the mature crRNA (39 or 45 nt in length), while the complex is capped by Cmr6 and Cmr1. The 5' end of the crRNA is bound to Cmr2 and Cmr3, while Cmr6 and a Cmr1 subunit (Cmr1-1 or Cmr1-2) cap the 3' end of the crRNA. The target RNA lies antiparallel to the crRNA, with its 5' end near Cmr1 and Cmr6 and its 3' end near Cmr2 and Cmr3; major target cleavage occurs nears the junction of Cmr1/Cmr6 and Cmr4/Cmr, with minor cleavage occurring at 6 nt intervals which coincide with the proposed spacing of Cmr4 subunits.

The protein localises to the cytoplasm. CRISPR (clustered regularly interspaced short palindromic repeat), is an adaptive immune system that provides protection against mobile genetic elements (viruses, transposable elements and conjugative plasmids). CRISPR clusters contain sequences complementary to antecedent mobile elements and target invading nucleic acids. CRISPR clusters are transcribed and processed into CRISPR RNA (crRNA), formerly called psiRNA (prokaryotic silencing) in this organism. Part of the Cmr ribonucleoprotein complex which has divalent cation-dependent endoribonuclease activity specific for ssRNA complementary to the crRNA (target RNA), generating 5' hydroxy- and 3' phosphate or 2'-3' cyclic phosphate termini. Cmr4 is probably the subunit that cleaves target RNA. Cmr complex does not cleave ssDNA complementary to the crRNA. Cleavage of invading RNA is guided by the crRNA; substrate cleavage occurs a fixed distance (14 nt) from the 3' end of the crRNA. In vitro reconstitution shows Cmr1-2 and Cmr5 are not absolutely necessary for target cleavage. In Pyrococcus furiosus (strain ATCC 43587 / DSM 3638 / JCM 8422 / Vc1), this protein is CRISPR system Cmr subunit Cmr1-2.